The following is a 650-amino-acid chain: DNA gyrase subunit B (650 aa).

A compositionally biased stretch (basic and acidic residues) spans 400–414; the sequence is RRSQEARELTRRKSP. The segment at 400-422 is disordered; it reads RRSQEARELTRRKSPFDSGSLPG. In terms of domain architecture, Toprim spans 435-549; that stretch reads SELYIVEGDS…QGNIFIAQPP (115 aa). Mg(2+)-binding residues include glutamate 441, aspartate 514, and aspartate 516.

This sequence belongs to the type II topoisomerase GyrB family. Heterotetramer, composed of two GyrA and two GyrB chains. In the heterotetramer, GyrA contains the active site tyrosine that forms a transient covalent intermediate with DNA, while GyrB binds cofactors and catalyzes ATP hydrolysis. Mg(2+) serves as cofactor. It depends on Mn(2+) as a cofactor. Requires Ca(2+) as cofactor.

It is found in the cytoplasm. The enzyme catalyses ATP-dependent breakage, passage and rejoining of double-stranded DNA.. A type II topoisomerase that negatively supercoils closed circular double-stranded (ds) DNA in an ATP-dependent manner to modulate DNA topology and maintain chromosomes in an underwound state. Negative supercoiling favors strand separation, and DNA replication, transcription, recombination and repair, all of which involve strand separation. Also able to catalyze the interconversion of other topological isomers of dsDNA rings, including catenanes and knotted rings. Type II topoisomerases break and join 2 DNA strands simultaneously in an ATP-dependent manner. In Mycoplasma genitalium (strain ATCC 33530 / DSM 19775 / NCTC 10195 / G37) (Mycoplasmoides genitalium), this protein is DNA gyrase subunit B.